We begin with the raw amino-acid sequence, 362 residues long: Vignain (362 aa).

Residues 1–20 (MAMKKLLWVVLSLSLVLGVA) form the signal peptide. Positions 21–126 (NSFDFHEKDL…SGTFMYEKVG (106 aa)) are cleaved as a propeptide — activation peptide. Cystine bridges form between cysteine 149–cysteine 191, cysteine 183–cysteine 224, and cysteine 282–cysteine 334. Cysteine 152 is an active-site residue. Residues histidine 288 and asparagine 309 contribute to the active site. N-linked (GlcNAc...) asparagine glycans are attached at residues asparagine 326 and asparagine 346. Positions 353 to 362 (GSLSSPKDEL) are cleaved as a propeptide — removed in mature form. The short motif at 359 to 362 (KDEL) is the Prevents secretion from ER element.

Belongs to the peptidase C1 family. The mature protein is not glycosylated. Post-translationally, the precursor stored in the endoplasmic reticulum lumen is processed during the transport to proteins bodies to two dominant mature forms that differ by a single amino acid residue at the N-terminus.

It localises to the endoplasmic reticulum lumen. The protein localises to the vacuole. Its subcellular location is the aleurone grain. Thought to be involved in the hydrolysis of stored seed proteins. In vitro, catalyzes the hydrolysis of proteins, such as azocasein. Shows a preferential cleavage for Asn-|-Xaa in small molecule substrates such as Boc-Asn-|-OPHNO(2). The polypeptide is Vignain (Vigna mungo (Black gram)).